Reading from the N-terminus, the 860-residue chain is Leucine--tRNA ligase (860 aa).

The 'HIGH' region motif lies at 42 to 52 (PYPSGRLHMGH). Positions 619 to 623 (KMSKS) match the 'KMSKS' region motif. Lys622 lines the ATP pocket.

The protein belongs to the class-I aminoacyl-tRNA synthetase family.

The protein localises to the cytoplasm. The catalysed reaction is tRNA(Leu) + L-leucine + ATP = L-leucyl-tRNA(Leu) + AMP + diphosphate. The chain is Leucine--tRNA ligase from Shigella sonnei (strain Ss046).